A 117-amino-acid chain; its full sequence is CUE domain-containing protein CUE4 (117 aa).

Positions 27–74 (QVPSRTVQDAKPAPSVATNDPSPEPVPSAPEERVARLNRHGSDRKRAV) are disordered. Lys37 participates in a covalent cross-link: Glycyl lysine isopeptide (Lys-Gly) (interchain with G-Cter in ubiquitin). Ser48 carries the post-translational modification Phosphoserine. Basic and acidic residues predominate over residues 56 to 74 (PEERVARLNRHGSDRKRAV). In terms of domain architecture, CUE spans 74–116 (VNSDMVEIVMTMAPHVPQEKVVQDLRNTGSIEHTMENIFAGKL).

Post-translationally, ubiquitinated.

The protein resides in the cytoplasm. It is found in the endoplasmic reticulum. In Saccharomyces cerevisiae (strain ATCC 204508 / S288c) (Baker's yeast), this protein is CUE domain-containing protein CUE4 (CUE4).